The sequence spans 1119 residues: MGRVEDMGLNAKLMKLETELFDYQYNMGLLLIEKKEWTSKFEELQQVYTETKDALKQEQEAHLIAISDAEKREENLTKALGVEKQCVLDLEKALRDMRSDYAEIKFTSDSKLAEASALITKVEEKSLEVESKLHSADAKLAELSRKGSDIERKSHELEARESALRRERLALNAEREALTDNISRQREDLREWERKLQEDEERLAEVRRLLNQREERANENDRLYQQKQSELDGEQKKIEIIMVSLKNKEDDISSRIAKLNIKEKEADAVKHSLEVKEKDLTEFEQKLNAREQSEIQKLLDEHKAILEVKKQSFEMEMDKRKNDFENDLQNRAVEVEKKEVEVKHLEAKLAKREHALDQKHEKLKEKEQYLASKLQDLNEREKSMKLEENKIEDERNQLLSDKQEMLCLKAEIEKDRASTEEQRLKLSEEIERLKITEEERLELARLQSELKQEIENCRHQRELLLKEEDELKQEKMRFEKEWEDLDERRTALMKDLKDITVQKENFEKLKHSEEDRLNNKKLDTESYVQKELDALRLTKDSFAATMEHEKAVLAERTSSEKKQMLNDFELWKRELETKLFNEREDMENALRLREKQFDEEREKELNNINYIKEVISKEREDIKLERSRIAKEKQEILMHQKHLDEQHVVMQKDIGQLVSLSEKLKDQREQFFKERECFIRFVESQKSCKNCGEMTSEFVVSDLQSLAELENLKALSVPQLAENYLRQDLQGTPDKNLSTVTPGAVGLGSPASGGTKSWLQKCTSKIFIFSASKKNNSPDQNTSRRLHVEASPNKLLNTEVIPELPSGVAGETLEMQNMQVSNSNREMESNLNLSGTEQSNIDSKALDVEDSQQSDVRAGNRKPGKRAKGRVRRKRSAKEVAEEAKTVLADPIELNENEHSNGLASAYTNESRGDSSLVGKRTRNSRKRNPSQPSQSAAGDVGADSEGHSDSVTAGGRQKRRRKVVPAVQAPTGRYNLRRHKTAAPLVANGALSDPNKGKEKEIDDGGGIGEEIPDEVDGNTHLVQVTTLKKRINVVNEFSSAGFHGINATSESQDRDAANQLVSDTMLSEEVNGTPEQSRGYQNQGDTSGAEGEDEDGDEVEHPGEVSMRKKVWKFLTT.

2 coiled-coil regions span residues Leu-140 to Gln-226 and Leu-328 to Arg-488. Disordered regions lie at residues Leu-846 to Ala-884, Leu-903 to Arg-974, Asn-989 to Asp-1015, and Gly-1046 to Met-1109. 2 stretches are compositionally biased toward basic residues: residues Gly-859–Ser-876 and Lys-920–Asn-929. A compositionally biased stretch (polar residues) spans Thr-1075–Gln-1085.

The protein belongs to the CRWN family.

The protein localises to the nucleus matrix. Its subcellular location is the nucleus lamina. In terms of biological role, architectural component of nuclear structure that plays different roles in controlling nuclear size and morphology. The protein is Nuclear matrix constituent protein 1 of Daucus carota subsp. sativus (Carrot).